The sequence spans 303 residues: Deoxyhypusine hydroxylase (303 aa).

HEAT-like PBS-type repeat units lie at residues 56 to 82 (LKHELAYCLGQMKDRRALPVLKQVLQD) and 89 to 115 (VRHEAGEALGAIGDPEVLELLREYAQD). 3 residues coordinate Fe cation: H58, H91, and E92. The tract at residues 139–158 (DSPDTNPYLSVDPAPPAEEK) is disordered. HEAT-like PBS-type repeat units follow at residues 176-202 (HRYRAMFALRNIGGEEAVLALADGLQI), 207-233 (FRHEIGYVLGQMQHKAAVPGLSAALER), and 240-266 (VRHECAEALGSIAHEDCLKALRAHVGD). H209, H242, and E243 together coordinate Fe cation.

The protein belongs to the deoxyhypusine hydroxylase family. The cofactor is Fe(2+).

The catalysed reaction is [eIF5A protein]-deoxyhypusine + AH2 + O2 = [eIF5A protein]-hypusine + A + H2O. It functions in the pathway protein modification; eIF5A hypusination. In terms of biological role, catalyzes the hydroxylation of the N(6)-(4-aminobutyl)-L-lysine intermediate produced by deoxyhypusine synthase/DHPS on a critical lysine of the eukaryotic translation initiation factor 5A/eIF-5A. This is the second step of the post-translational modification of that lysine into an unusual amino acid residue named hypusine. Hypusination is unique to mature eIF-5A factor and is essential for its function. This is Deoxyhypusine hydroxylase (dohh) from Xenopus laevis (African clawed frog).